Consider the following 635-residue polypeptide: Threonine--tRNA ligase (635 aa).

Positions 1–61 (MIKITLKDGK…HKDSSLEILT (61 aa)) constitute a TGS domain. The tract at residues 242-532 (DHRKLGKELD…LIEQYAGAFP (291 aa)) is catalytic. Zn(2+) is bound by residues Cys-333, His-384, and His-509.

It belongs to the class-II aminoacyl-tRNA synthetase family. As to quaternary structure, homodimer. Zn(2+) is required as a cofactor.

Its subcellular location is the cytoplasm. The catalysed reaction is tRNA(Thr) + L-threonine + ATP = L-threonyl-tRNA(Thr) + AMP + diphosphate + H(+). Its function is as follows. Catalyzes the attachment of threonine to tRNA(Thr) in a two-step reaction: L-threonine is first activated by ATP to form Thr-AMP and then transferred to the acceptor end of tRNA(Thr). Also edits incorrectly charged L-seryl-tRNA(Thr). This chain is Threonine--tRNA ligase, found in Clostridium botulinum (strain 657 / Type Ba4).